We begin with the raw amino-acid sequence, 486 residues long: ATP-dependent rRNA helicase rrp3 (486 aa).

Residues 1-60 (MSSVKRRKTDKNPSLEGLKSKKTKESKKESHTPSPEPIEDTEDNRVIEETEEAEEDDAPK) form a disordered region. The Q motif signature appears at 60 to 88 (KSFKDLGIVDSLCEACDTLGYKAPTPIQR). Residues 91–262 (IPLALQGRDL…RASLKDPLRV (172 aa)) form the Helicase ATP-binding domain. Position 104–111 (104–111 (AETGSGKT)) interacts with ATP. The DEAD box signature appears at 210–213 (DEAD). The 149-residue stretch at 286–434 (HKDTYLIYLL…EYPTVKDEVM (149 aa)) folds into the Helicase C-terminal domain. Composition is skewed to basic and acidic residues over residues 447–460 (ARNE…DRGK) and 476–486 (RGRDEMDREEG). Residues 447 to 486 (ARNEMKNLHEDRGKKGAVLKGRRPANGAKRGRDEMDREEG) are disordered.

Belongs to the DEAD box helicase family. DDX47/RRP3 subfamily. In terms of assembly, interacts with the SSU processome.

The protein resides in the nucleus. The catalysed reaction is ATP + H2O = ADP + phosphate + H(+). Functionally, ATP-dependent rRNA helicase required for pre-ribosomal RNA processing. Involved in the maturation of the 35S-pre-rRNA and to its cleavage to mature 18S rRNA. The polypeptide is ATP-dependent rRNA helicase rrp3 (Botryotinia fuckeliana (strain B05.10) (Noble rot fungus)).